Reading from the N-terminus, the 175-residue chain is Large ribosomal subunit protein uL10 (175 aa).

This sequence belongs to the universal ribosomal protein uL10 family. In terms of assembly, part of the ribosomal stalk of the 50S ribosomal subunit. The N-terminus interacts with L11 and the large rRNA to form the base of the stalk. The C-terminus forms an elongated spine to which L12 dimers bind in a sequential fashion forming a multimeric L10(L12)X complex.

Functionally, forms part of the ribosomal stalk, playing a central role in the interaction of the ribosome with GTP-bound translation factors. The polypeptide is Large ribosomal subunit protein uL10 (Methylobacterium nodulans (strain LMG 21967 / CNCM I-2342 / ORS 2060)).